Reading from the N-terminus, the 154-residue chain is Lipoprotein signal peptidase (154 aa).

A run of 3 helical transmembrane segments spans residues 4–24 (IIIP…KLWI), 62–82 (LFTL…MKHI), and 84–104 (GSYW…GNFI). Active-site residues include Asp114 and Asp130. A helical transmembrane segment spans residues 125-145 (IFNVADSYLTIGIICLMIALW).

This sequence belongs to the peptidase A8 family.

Its subcellular location is the cell membrane. The catalysed reaction is Release of signal peptides from bacterial membrane prolipoproteins. Hydrolyzes -Xaa-Yaa-Zaa-|-(S,diacylglyceryl)Cys-, in which Xaa is hydrophobic (preferably Leu), and Yaa (Ala or Ser) and Zaa (Gly or Ala) have small, neutral side chains.. It functions in the pathway protein modification; lipoprotein biosynthesis (signal peptide cleavage). This protein specifically catalyzes the removal of signal peptides from prolipoproteins. The protein is Lipoprotein signal peptidase of Streptococcus agalactiae serotype Ia (strain ATCC 27591 / A909 / CDC SS700).